A 153-amino-acid chain; its full sequence is UPF0260 protein YcgN (153 aa).

This sequence belongs to the UPF0260 family.

The protein is UPF0260 protein YcgN of Salmonella agona (strain SL483).